The following is a 284-amino-acid chain: Pantothenate synthetase (284 aa).

30–37 (MGNLHEGH) contributes to the ATP binding site. Residue histidine 37 is the Proton donor of the active site. (R)-pantoate is bound at residue glutamine 61. Glutamine 61 is a beta-alanine binding site. An ATP-binding site is contributed by 149 to 152 (GEKD). Glutamine 155 contacts (R)-pantoate. Residues valine 178 and 186-189 (LSSR) each bind ATP.

Belongs to the pantothenate synthetase family. In terms of assembly, homodimer.

It localises to the cytoplasm. It catalyses the reaction (R)-pantoate + beta-alanine + ATP = (R)-pantothenate + AMP + diphosphate + H(+). The protein operates within cofactor biosynthesis; (R)-pantothenate biosynthesis; (R)-pantothenate from (R)-pantoate and beta-alanine: step 1/1. Its function is as follows. Catalyzes the condensation of pantoate with beta-alanine in an ATP-dependent reaction via a pantoyl-adenylate intermediate. This is Pantothenate synthetase from Yersinia pestis bv. Antiqua (strain Antiqua).